Here is a 308-residue protein sequence, read N- to C-terminus: Isoaspartyl peptidase/L-asparaginase (308 aa).

Methionine 1 is modified (N-acetylmethionine). Threonine 168 acts as the Nucleophile in catalysis. Residues 196 to 199 (RVGD) and 219 to 222 (TGHG) each bind substrate.

It belongs to the Ntn-hydrolase family. As to quaternary structure, heterodimer of an alpha and beta chain produced by autocleavage. This heterodimer may then dimerize in turn, giving rise to a heterotetramer. Post-translationally, cleaved into an alpha and beta chain by autocatalysis; this activates the enzyme. The N-terminal residue of the beta subunit is responsible for the nucleophile hydrolase activity. As to expression, expressed in brain, kidney, testis and tissues of the gastrointestinal tract. Present in sperm (at protein level). Over-expressed in uterine, mammary, prostatic and ovarian carcinoma.

The protein resides in the cytoplasm. The catalysed reaction is L-asparagine + H2O = L-aspartate + NH4(+). The enzyme catalyses Cleavage of a beta-linked Asp residue from the N-terminus of a polypeptide.. Its activity is regulated as follows. Glycine accelerates autocleavage into an alpha and beta chain. Has both L-asparaginase and beta-aspartyl peptidase activity. May be involved in the production of L-aspartate, which can act as an excitatory neurotransmitter in some brain regions. Is highly active with L-Asp beta-methyl ester. Besides, has catalytic activity toward beta-aspartyl dipeptides and their methyl esters, including beta-L-Asp-L-Phe, beta-L-Asp-L-Phe methyl ester (aspartame), beta-L-Asp-L-Ala, beta-L-Asp-L-Leu and beta-L-Asp-L-Lys. Does not have aspartylglucosaminidase activity and is inactive toward GlcNAc-L-Asn. Likewise, has no activity toward glutamine. This chain is Isoaspartyl peptidase/L-asparaginase (ASRGL1), found in Homo sapiens (Human).